Here is a 1538-residue protein sequence, read N- to C-terminus: Lhr helicase/uracil glycosylase (1538 aa).

The segment at 1–897 is lhr-Core; that stretch reads MADNPDPSSL…ERRASVLSLD (897 aa). Gln34, Lys57, Thr58, Asp179, Glu180, Ile398, Arg415, and His418 together coordinate ATP. Positions 38-235 constitute a Helicase ATP-binding domain; it reads WHVAARSEHA…FLGGDRPVTV (198 aa). Positions 179-182 match the DEVH box motif; that stretch reads DEVH. A Helicase C-terminal domain is found at 284-462; the sequence is GILDEVLRHR…NLTPPHNPLD (179 aa). Positions 463-552 are beta-sheet bundle; it reads VLAQQTVAAA…VTSGGTIPDR (90 aa). Residues 553 to 623 form a WH domain region; that stretch reads GMYSVLLPEG…SARLPFWRGE (71 aa). The tract at residues 624 to 897 is domain 4; that stretch reads GNGRPAELGE…ERRASVLSLD (274 aa). A lhr-CTD region spans residues 898–1538; sequence SELLRNLLGQ…SSSPQGLDWG (641 aa). The tract at residues 1287–1312 is disordered; that stretch reads SNARTSTRRSHRARRGRPVYAQPVSP. A compositionally biased stretch (basic residues) spans 1292-1303; the sequence is STRRSHRARRGR.

The protein belongs to the Lhr helicase family. Homooligomerizes, probably a homotetramer. Ca(2+) serves as cofactor. The cofactor is Uracil deglycosylase activity does not require a cofactor..

It catalyses the reaction Couples ATP hydrolysis with the unwinding of duplex DNA by translocating in the 3'-5' direction.. The catalysed reaction is ATP + H2O = ADP + phosphate + H(+). The enzyme catalyses Hydrolyzes single-stranded DNA or mismatched double-stranded DNA and polynucleotides, releasing free uracil.. Functionally, a 3'-5' helicase probably involved in DNA repair. Translocates in an ATP-dependent manner 3'-to-5' on single-stranded (ss)DNA, unwinding any encountered duplex nucleic acid. An RNA:DNA hybrid with a 3'-ssDNA loading strand is a 4.5-fold better helicase substrate than 3'-tailed double-stranded (ds)DNA; substrates where the helicase loads on a 3'-ssRNA tail (DNA:RNA and RNA:RNA) are not unwound. Unlike its M.smegmatis counterpart, the ATPase is not ssDNA-dependent. Forms a clamp around the ssDNA loading strand. In terms of biological role, excises uracil residues from DNA; forked DNA with a dU residue is the best substrate followed by ssDNA. Inactive on dsDNA with a dU residue or DNA with an 8-oxoguanine residue. Uracil residues in DNA can arise as a result of misincorporation of dUMP residues by DNA polymerase or due to deamination of cytosine. In Escherichia coli (strain K12), this protein is Lhr helicase/uracil glycosylase.